The primary structure comprises 254 residues: Nickel import ATP-binding protein NikD (254 aa).

One can recognise an ABC transporter domain in the interval 2–241; it reads PQQIELRNIT…PKHTVTRSLV (240 aa). 36 to 43 provides a ligand contact to ATP; sequence GGSGSGKS.

Belongs to the ABC transporter superfamily. Nickel importer (TC 3.A.1.5.3) family. In terms of assembly, the complex is composed of two ATP-binding proteins (NikD and NikE), two transmembrane proteins (NikB and NikC) and a solute-binding protein (NikA).

It is found in the cell inner membrane. The enzyme catalyses Ni(2+)(out) + ATP + H2O = Ni(2+)(in) + ADP + phosphate + H(+). Its function is as follows. Part of the ABC transporter complex NikABCDE involved in nickel import. Responsible for energy coupling to the transport system. This is Nickel import ATP-binding protein NikD from Shigella flexneri.